The following is a 122-amino-acid chain: Ribosome-binding factor A (122 aa).

It belongs to the RbfA family. As to quaternary structure, monomer. Binds 30S ribosomal subunits, but not 50S ribosomal subunits or 70S ribosomes.

Its subcellular location is the cytoplasm. Functionally, one of several proteins that assist in the late maturation steps of the functional core of the 30S ribosomal subunit. Associates with free 30S ribosomal subunits (but not with 30S subunits that are part of 70S ribosomes or polysomes). Required for efficient processing of 16S rRNA. May interact with the 5'-terminal helix region of 16S rRNA. The chain is Ribosome-binding factor A from Pelagibacter ubique (strain HTCC1062).